Here is a 285-residue protein sequence, read N- to C-terminus: MEMO1 family protein Igni_0992 (285 aa).

The protein belongs to the MEMO1 family.

The polypeptide is MEMO1 family protein Igni_0992 (Ignicoccus hospitalis (strain KIN4/I / DSM 18386 / JCM 14125)).